A 292-amino-acid polypeptide reads, in one-letter code: Protease HtpX (292 aa).

2 helical membrane-spanning segments follow: residues 5–25 (VVLF…VMSV) and 34–54 (SGLL…SLLL). Position 140 (histidine 140) interacts with Zn(2+). The active site involves glutamate 141. Histidine 144 contributes to the Zn(2+) binding site. 2 helical membrane passes run 155 to 175 (LLQG…GGII) and 193 to 213 (IIVF…AMWF). Zn(2+) is bound at residue glutamate 218.

Belongs to the peptidase M48B family. Zn(2+) serves as cofactor.

The protein localises to the cell inner membrane. This chain is Protease HtpX, found in Xanthomonas campestris pv. campestris (strain B100).